The sequence spans 143 residues: 3-dehydroquinate dehydratase (143 aa).

The Proton acceptor role is filled by Y22. Substrate-binding residues include N73, H79, and D86. H99 acts as the Proton donor in catalysis. Substrate is bound by residues 100–101 (IS) and R110.

The protein belongs to the type-II 3-dehydroquinase family. In terms of assembly, homododecamer.

It carries out the reaction 3-dehydroquinate = 3-dehydroshikimate + H2O. Its pathway is metabolic intermediate biosynthesis; chorismate biosynthesis; chorismate from D-erythrose 4-phosphate and phosphoenolpyruvate: step 3/7. Its function is as follows. Catalyzes a trans-dehydration via an enolate intermediate. This Mycolicibacterium paratuberculosis (strain ATCC BAA-968 / K-10) (Mycobacterium paratuberculosis) protein is 3-dehydroquinate dehydratase.